The sequence spans 195 residues: Translation machinery-associated protein 22 (195 aa).

The SUI1 domain occupies 94 to 165; sequence VLIKRIERNR…EAKEYIEKLL (72 aa). A disordered region spans residues 176–195; that stretch reads EQVDEKKKKKATAPGATPAA.

It belongs to the DENR family. Interacts with the 40S ribosomal subunit.

Its subcellular location is the cytoplasm. This Scheffersomyces stipitis (strain ATCC 58785 / CBS 6054 / NBRC 10063 / NRRL Y-11545) (Yeast) protein is Translation machinery-associated protein 22 (TMA22).